The sequence spans 249 residues: ATP synthase subunit a, chloroplastic (249 aa).

The next 5 helical transmembrane spans lie at 40–60 (QVLI…VLAI), 97–117 (VPFI…GALL), 136–156 (INTT…AGLS), 201–221 (LVVV…VMFL), and 222–242 (GLFT…AYIG).

This sequence belongs to the ATPase A chain family. In terms of assembly, F-type ATPases have 2 components, CF(1) - the catalytic core - and CF(0) - the membrane proton channel. CF(1) has five subunits: alpha(3), beta(3), gamma(1), delta(1), epsilon(1). CF(0) has four main subunits: a, b, b' and c.

It is found in the plastid. The protein resides in the chloroplast thylakoid membrane. In terms of biological role, key component of the proton channel; it plays a direct role in the translocation of protons across the membrane. This Olimarabidopsis pumila (Dwarf rocket) protein is ATP synthase subunit a, chloroplastic.